A 244-amino-acid polypeptide reads, in one-letter code: Krueppel-like factor 9 (244 aa).

Disordered stretches follow at residues 24–51 (VPEH…GDPG) and 79–143 (PSVC…EKRH). The span at 32-51 (DAERLRLPEREVTKEHGDPG) shows a compositional bias: basic and acidic residues. At Ser-122 the chain carries Phosphoserine. Over residues 134–143 (KGKHASEKRH) the composition is skewed to basic residues. 3 C2H2-type zinc fingers span residues 143-167 (HKCP…YRVH), 173-197 (FPCT…YRTH), and 203-225 (FRCP…ARRH).

It belongs to the Sp1 C2H2-type zinc-finger protein family. As to quaternary structure, interacts with ZZEF1.

The protein localises to the nucleus. Transcription factor that binds to GC box promoter elements. Selectively activates mRNA synthesis from genes containing tandem repeats of GC boxes but represses genes with a single GC box. Acts as an epidermal circadian transcription factor regulating keratinocyte proliferation. In Rattus norvegicus (Rat), this protein is Krueppel-like factor 9 (Klf9).